A 119-amino-acid chain; its full sequence is Achromolysin (119 aa).

This sequence belongs to the peptidase M4 family. The cofactor is Ca(2+). It depends on Zn(2+) as a cofactor.

The protein localises to the secreted. Its function is as follows. Has staphylolytic activity. The sequence is that of Achromolysin from Achromobacter lyticus.